The primary structure comprises 792 residues: RNA-binding protein RRM4 (792 aa).

Residues 37 to 60 (TDSTAQASHAAEQTIDAHQQAGDV) are disordered. 3 RRM domains span residues 72–145 (PLLY…QDAS), 154–235 (KPRL…IDTA), and 321–398 (CNLF…LHEP). Residues 412-424 (AANADNSDMSSNS) show a composition bias toward low complexity. 2 disordered regions span residues 412-438 (AANADNSDMSSNSPPTEARKADKRQSR) and 630-649 (DESGEDLSPPRASSGSAPVP). Residues 640–649 (RASSGSAPVP) are compositionally biased toward polar residues. The PABC domain occupies 715-792 (ATDDFIDSLQ…QHKVAAGLNK (78 aa)).

It belongs to the polyadenylate-binding protein type-1 family. In terms of assembly, part of large ribonucleoprotein complexes (mRNPs) containing RNA-binding proteins RRM4 and PAB1, endosome-binding protein UPA1, core scaffold protein UPA2 and associated factor GRP1. Interacts (via PABC domain) with UPA1 (via PAM2 domain).

It localises to the cytoplasm. The protein resides in the cytoskeleton. Its subcellular location is the endosome. Its function is as follows. Key RNA-binding protein involved in the formation of polar-growing hyphae which is essential for infection by the plant pathogen. During filamentation, assembles into particles that shuttle bidirectionally along microtubules to both poles. The RRM4 transport particles are part of the endosomal mRNP transport that regulates polarity of the infectious hyphae by transporting distinct mRNAs encoding, for example, the ubiquitin fusion protein UBI1, the small G protein RHO3, or the septin CDC3, from the nucleus to cell poles. Recognizes a broad spectrum of cargo mRNAs and precisely binds at stop codons, which constitute landmark sites of translation, suggesting an intimate connection of mRNA transport and translation. Also binds to the specific binding motif UAUG of cargo mRNAs via its third RRM. Plus-end-directed KIN3, a kinesin-3 type motor, mediates anterograde transport of RRM4-containing mRNPs whereas split dynein DYM1-DYN2 functions in retrograde movement of mRNPs. This is RNA-binding protein RRM4 from Mycosarcoma maydis (Corn smut fungus).